The primary structure comprises 466 residues: Pyruvate kinase (466 aa).

Arg-32 is a binding site for substrate. The K(+) site is built by Asn-34, Ser-36, and Asp-66. 34-37 (NTSH) contacts ATP. Arg-73 serves as a coordination point for ATP. Glu-219 serves as a coordination point for Mg(2+). The substrate site is built by Gly-242, Asp-243, and Thr-275. Asp-243 is a Mg(2+) binding site.

It belongs to the pyruvate kinase family. In terms of assembly, homotetramer. A divalent metal cation is required as a cofactor.

It carries out the reaction pyruvate + ATP = phosphoenolpyruvate + ADP + H(+). It functions in the pathway carbohydrate degradation; glycolysis; pyruvate from D-glyceraldehyde 3-phosphate: step 5/5. Its activity is regulated as follows. Allosterically activated by AMP and inhibited by ATP. The sequence is that of Pyruvate kinase (pyk) from Thermotoga maritima (strain ATCC 43589 / DSM 3109 / JCM 10099 / NBRC 100826 / MSB8).